The primary structure comprises 642 residues: Sodium-dependent phosphate transport protein 2A (642 aa).

Residues 1-106 (MISYGEQLSS…LRRTAMTLLK (106 aa)) are Cytoplasmic-facing. A phosphoserine mark is found at Ser14 and Ser37. The chain crosses the membrane as a helical span at residues 107 to 128 (LPLMVTFLYLFVCSLDVLSSAF). The Extracellular segment spans residues 129–148 (QLAGGKVAGDIFKDNAILAN). The helical transmembrane segment at 149–166 (PVAGLVVGILVTVLVQSS) threads the bilayer. The Cytoplasmic segment spans residues 167–168 (ST). The helical transmembrane segment at 169 to 188 (ATSIIVSMVSSGLLEVSSAI) threads the bilayer. Residues 189–350 (PIIMGSNIGT…HIFVDTQLPD (162 aa)) lie on the Extracellular side of the membrane. 2 cysteine pairs are disulfide-bonded: Cys228–Cys525 and Cys309–Cys339. 3 N-linked (GlcNAc...) asparagine glycosylation sites follow: Asn301, Asn326, and Asn333. Residues 351–373 (LAVGLILLAGSLVLLCTCLILLV) traverse the membrane as a helical segment. Residues 374–415 (KMLNSLLKGQVAKVIQKVINTDLPAPFTWVTGYFAMVVGAAM) lie on the Cytoplasmic side of the membrane. A helical transmembrane segment spans residues 416 to 439 (TFIVQSSSVFTSAITPLVGLGVIS). The Extracellular segment spans residues 440–469 (IERAYPLTLGSNIGTTTTAILAALASPREK). A helical membrane pass occupies residues 470–490 (LSSSFQIALCHFFFNISGILL). Topologically, residues 491 to 516 (WYPLPCTRLPIRMAKALGKRTAKYRW) are cytoplasmic. A Phosphothreonine; by PKC modification is found at Thr511. A helical membrane pass occupies residues 517–537 (FAVLYLLVCFLLLPSLVFGIS). Residues 538–542 (MAGWR) lie on the Extracellular side of the membrane. A helical transmembrane segment spans residues 543–564 (AMVGVGAPFGALLAFVVLINVL). Residues 565–642 (QSRSPGRLPK…LPAHHNATRL (78 aa)) lie on the Cytoplasmic side of the membrane. Position 610 is a phosphoserine (Ser610). Thr626 is subject to Phosphothreonine. At Ser628 the chain carries Phosphoserine.

This sequence belongs to the SLC34A transporter family. In terms of assembly, interacts via its C-terminal region with NHERF4. Interacts with NHERF1. Interacts with TMEM174; regulates SLC34A1 internalization by PTH and FGF23. As to expression, expressed in the kidney cortex.

It localises to the apical cell membrane. Its subcellular location is the cell membrane. The enzyme catalyses 3 Na(+)(out) + phosphate(out) = 3 Na(+)(in) + phosphate(in). Its activity is regulated as follows. Transport activity is significantly increased in response to dietary phosphate deprivation. In terms of biological role, involved in actively transporting phosphate into cells via Na(+) cotransport in the renal brush border membrane. The cotransport has a Na(+):Pi stoichiometry of 3:1 and is electrogenic. This Oryctolagus cuniculus (Rabbit) protein is Sodium-dependent phosphate transport protein 2A.